The primary structure comprises 350 residues: Zona pellucida-binding protein 1 (350 aa).

An N-terminal signal peptide occupies residues 1–44 (MEALAPGRAPRGRRRAGASGSVLSPLSLAAVLLCALLRAPPAVG). 3 N-linked (GlcNAc...) asparagine glycosylation sites follow: asparagine 113, asparagine 186, and asparagine 339.

It belongs to the zona pellucida-binding protein Sp38 family. In terms of processing, N-glycosylated. In terms of tissue distribution, expressed in testis (at protein level). Expressed in male germ cells.

It is found in the cytoplasmic vesicle. Its subcellular location is the secretory vesicle. The protein localises to the acrosome. The protein resides in the acrosome membrane. It localises to the secreted. Its function is as follows. Plays a role in acrosome compaction and sperm morphogenesis. Is implicated in sperm-oocyte interaction during fertilization. The polypeptide is Zona pellucida-binding protein 1 (Zpbp) (Mus musculus (Mouse)).